A 253-amino-acid chain; its full sequence is 3-deoxy-manno-octulosonate cytidylyltransferase (253 aa).

The protein belongs to the KdsB family.

The protein localises to the cytoplasm. It carries out the reaction 3-deoxy-alpha-D-manno-oct-2-ulosonate + CTP = CMP-3-deoxy-beta-D-manno-octulosonate + diphosphate. It participates in nucleotide-sugar biosynthesis; CMP-3-deoxy-D-manno-octulosonate biosynthesis; CMP-3-deoxy-D-manno-octulosonate from 3-deoxy-D-manno-octulosonate and CTP: step 1/1. It functions in the pathway bacterial outer membrane biogenesis; lipopolysaccharide biosynthesis. Its function is as follows. Activates KDO (a required 8-carbon sugar) for incorporation into bacterial lipopolysaccharide in Gram-negative bacteria. The sequence is that of 3-deoxy-manno-octulosonate cytidylyltransferase from Aeromonas hydrophila subsp. hydrophila (strain ATCC 7966 / DSM 30187 / BCRC 13018 / CCUG 14551 / JCM 1027 / KCTC 2358 / NCIMB 9240 / NCTC 8049).